Consider the following 1003-residue polypeptide: Glycine--tRNA ligase (1003 aa).

Residues Met-1 to Cys-310 form a glycine--tRNA ligase alpha subunit region. The tract at residues Gln-311–Leu-1003 is glycine--tRNA ligase beta subunit.

It belongs to the class-II aminoacyl-tRNA synthetase family.

The protein resides in the cytoplasm. The enzyme catalyses tRNA(Gly) + glycine + ATP = glycyl-tRNA(Gly) + AMP + diphosphate. The chain is Glycine--tRNA ligase (glyQS) from Chlamydia muridarum (strain MoPn / Nigg).